Consider the following 331-residue polypeptide: ADP-L-glycero-D-manno-heptose-6-epimerase (331 aa).

Residues F11 to I12, D32 to N33, K39, K54, E75 to S79, and N92 each bind NADP(+). The Proton acceptor role is filled by Y139. K143 lines the NADP(+) pocket. N168 provides a ligand contact to substrate. Positions 169 and 177 each coordinate NADP(+). The active-site Proton acceptor is K177. Substrate contacts are provided by residues R179, H186, F200–Y203, R213, and Y292.

This sequence belongs to the NAD(P)-dependent epimerase/dehydratase family. HldD subfamily. In terms of assembly, homopentamer. The cofactor is NADP(+).

The catalysed reaction is ADP-D-glycero-beta-D-manno-heptose = ADP-L-glycero-beta-D-manno-heptose. It participates in nucleotide-sugar biosynthesis; ADP-L-glycero-beta-D-manno-heptose biosynthesis; ADP-L-glycero-beta-D-manno-heptose from D-glycero-beta-D-manno-heptose 7-phosphate: step 4/4. Its function is as follows. Catalyzes the interconversion between ADP-D-glycero-beta-D-manno-heptose and ADP-L-glycero-beta-D-manno-heptose via an epimerization at carbon 6 of the heptose. This chain is ADP-L-glycero-D-manno-heptose-6-epimerase, found in Cupriavidus metallidurans (strain ATCC 43123 / DSM 2839 / NBRC 102507 / CH34) (Ralstonia metallidurans).